Reading from the N-terminus, the 334-residue chain is Phospho-N-acetylmuramoyl-pentapeptide-transferase (334 aa).

Transmembrane regions (helical) follow at residues 2-22 (IPVL…GPVV), 55-75 (VIFL…PGGV), 78-98 (GWIE…LGFM), 116-136 (EKLL…VFVL), 154-174 (GLAL…VVLA), 187-207 (GLAA…ALVM), 211-231 (WVGI…CYNF), 236-256 (VFMG…AAVI), 262-282 (FLLI…IQVI), and 311-331 (VVLT…AGLK).

Belongs to the glycosyltransferase 4 family. MraY subfamily. The cofactor is Mg(2+).

It is found in the cell membrane. The enzyme catalyses UDP-N-acetyl-alpha-D-muramoyl-L-alanyl-gamma-D-glutamyl-meso-2,6-diaminopimeloyl-D-alanyl-D-alanine + di-trans,octa-cis-undecaprenyl phosphate = di-trans,octa-cis-undecaprenyl diphospho-N-acetyl-alpha-D-muramoyl-L-alanyl-D-glutamyl-meso-2,6-diaminopimeloyl-D-alanyl-D-alanine + UMP. Its pathway is cell wall biogenesis; peptidoglycan biosynthesis. Catalyzes the initial step of the lipid cycle reactions in the biosynthesis of the cell wall peptidoglycan: transfers peptidoglycan precursor phospho-MurNAc-pentapeptide from UDP-MurNAc-pentapeptide onto the lipid carrier undecaprenyl phosphate, yielding undecaprenyl-pyrophosphoryl-MurNAc-pentapeptide, known as lipid I. The chain is Phospho-N-acetylmuramoyl-pentapeptide-transferase from Desulforudis audaxviator (strain MP104C).